Reading from the N-terminus, the 396-residue chain is Purine ribonucleoside efflux pump NepI (396 aa).

Residues 1-21 are Cytoplasmic-facing; sequence MSEFIAENRGANAITRPNWSA. Residues 22-42 traverse the membrane as a helical segment; sequence VFSVAFCVACLIIVEFLPVSL. The Periplasmic segment spans residues 43–54; that stretch reads LTPMAQDLGISE. Residues 55-75 traverse the membrane as a helical segment; it reads GVAGQSVTVTAFVAMFASLFI. Residues 76 to 85 lie on the Cytoplasmic side of the membrane; it reads TQTIQATDRR. Residues 86-106 form a helical membrane-spanning segment; that stretch reads YVVILFAVLLTLSCLLVSFAN. Position 107 (Ser-107) is a topological domain, periplasmic. A helical membrane pass occupies residues 108–128; it reads FSLLLIGRACLGLALGGFWAM. The Cytoplasmic segment spans residues 129–147; sequence SASLTMRLVPPRTVPKALS. Residues 148–168 traverse the membrane as a helical segment; the sequence is VIFGAVSIALVIAAPLGSFLG. Residues 169-175 lie on the Periplasmic side of the membrane; sequence ELIGWRN. A helical membrane pass occupies residues 176-196; it reads VFNAAAAMGVLCIFWIIKSLP. Topologically, residues 197 to 215 are cytoplasmic; that stretch reads SLPGEPSHQKQNTFRLLQR. Residues 216–236 form a helical membrane-spanning segment; the sequence is PGVMAGMIAIFMSFAGQFAFF. Topologically, residues 237-255 are periplasmic; sequence TYIRPVYMNLAGFGVDGLT. A helical membrane pass occupies residues 256-276; the sequence is LVLLSFGIASFVGTSLSSFIL. The Cytoplasmic portion of the chain corresponds to 277 to 281; sequence KRSVK. Residues 282 to 302 traverse the membrane as a helical segment; the sequence is LALAGAPFVLALSALVLTLWG. At 303-305 the chain is on the periplasmic side; it reads SYK. The helical transmembrane segment at 306 to 326 threads the bilayer; it reads IVATGVAIIWGLTFALIPVGW. The Cytoplasmic portion of the chain corresponds to 327-343; the sequence is STWITRSLADQAEKAGS. A helical membrane pass occupies residues 344-364; that stretch reads IQVAVIQLANTCGAAIGGYAL. Residues 365 to 366 lie on the Periplasmic side of the membrane; sequence DN. A helical membrane pass occupies residues 367–387; that stretch reads IGLTSPLMLSGTLMLLTALLV. Over 388 to 396 the chain is Cytoplasmic; it reads TAKVKMKKS.

It belongs to the major facilitator superfamily. DHA1 family. NepI (TC 2.A.1.2.26) subfamily.

The protein resides in the cell inner membrane. The enzyme catalyses inosine(in) + H(+)(out) = inosine(out) + H(+)(in). The catalysed reaction is guanosine(in) + H(+)(out) = guanosine(out) + H(+)(in). Its function is as follows. Involved in the efflux of purine ribonucleosides, such as inosine and guanosine. The sequence is that of Purine ribonucleoside efflux pump NepI from Escherichia coli O6:H1 (strain CFT073 / ATCC 700928 / UPEC).